Reading from the N-terminus, the 441-residue chain is G2/mitotic-specific cyclin-2 (441 aa).

It belongs to the cyclin family. Cyclin AB subfamily. As to quaternary structure, interacts with the CDC2 and CDK2 protein kinases to form a serine/threonine kinase holoenzyme complex. The cyclin subunit imparts substrate specificity to the complex.

Its function is as follows. Essential for the control of the cell cycle at the G2/M (mitosis) transition. G2/M cyclins accumulate steadily during G2 and are abruptly destroyed at mitosis. The protein is G2/mitotic-specific cyclin-2 of Antirrhinum majus (Garden snapdragon).